A 165-amino-acid chain; its full sequence is AIG2-like protein A (165 aa).

15–20 (YGSFQD) contributes to the substrate binding site. Glutamate 83 (proton acceptor) is an active-site residue.

Belongs to the gamma-glutamylcyclotransferase family. As to expression, expressed only in seeds.

Functionally, putative gamma-glutamylcyclotransferase. This chain is AIG2-like protein A, found in Arabidopsis thaliana (Mouse-ear cress).